Reading from the N-terminus, the 325-residue chain is GTP 3',8-cyclase (325 aa).

The 216-residue stretch at 4–219 (NYNRNINYLR…HGLQQKFGLL (216 aa)) folds into the Radical SAM core domain. Arg13 serves as a coordination point for GTP. The [4Fe-4S] cluster site is built by Cys20 and Cys24. An S-adenosyl-L-methionine-binding site is contributed by Tyr26. Cys27 contributes to the [4Fe-4S] cluster binding site. Arg63 is a GTP binding site. Gly67 is an S-adenosyl-L-methionine binding site. Thr94 contacts GTP. Ser118 is a binding site for S-adenosyl-L-methionine. Lys155 is a GTP binding site. An S-adenosyl-L-methionine-binding site is contributed by Met189. Residues Cys254 and Cys257 each contribute to the [4Fe-4S] cluster site. A GTP-binding site is contributed by 259 to 261 (RLR). A [4Fe-4S] cluster-binding site is contributed by Cys271.

The protein belongs to the radical SAM superfamily. MoaA family. Monomer and homodimer. It depends on [4Fe-4S] cluster as a cofactor.

The catalysed reaction is GTP + AH2 + S-adenosyl-L-methionine = (8S)-3',8-cyclo-7,8-dihydroguanosine 5'-triphosphate + 5'-deoxyadenosine + L-methionine + A + H(+). It participates in cofactor biosynthesis; molybdopterin biosynthesis. In terms of biological role, catalyzes the cyclization of GTP to (8S)-3',8-cyclo-7,8-dihydroguanosine 5'-triphosphate. This is GTP 3',8-cyclase from Desulforamulus reducens (strain ATCC BAA-1160 / DSM 100696 / MI-1) (Desulfotomaculum reducens).